A 683-amino-acid chain; its full sequence is Synaptic vesicle glycoprotein 2B (683 aa).

Residues 1-10 show a composition bias toward basic and acidic residues; that stretch reads MDDYRYRDNY. Positions 1 to 73 are disordered; that stretch reads MDDYRYRDNY…TKMAPSRADG (73 aa). At 1–110 the chain is on the cytoplasmic side; the sequence is MDDYRYRDNY…ECGHGRFQWT (110 aa). A Phosphoserine modification is found at Ser33. A Phosphothreonine modification is found at Thr36. A helical transmembrane segment spans residues 111 to 131; the sequence is LFFVLGLALMADGVEIFVVSF. The Extracellular portion of the chain corresponds to 132–148; it reads ALPSAEKDMCLSSSKKG. Residues 149–169 form a helical membrane-spanning segment; sequence MLGLIVYLGMMAGAFILGGLA. The Cytoplasmic segment spans residues 170-182; the sequence is DKLGRKKVLSMSL. Residues 183–203 form a helical membrane-spanning segment; it reads AINASFASLSSFVQGYGAFLF. Residues 204–205 are Extracellular-facing; that stretch reads CR. Residues 206–226 form a helical membrane-spanning segment; that stretch reads LISGIGIGGSLPIVFAYFSEF. Over 227-237 the chain is Cytoplasmic; that stretch reads LSREKRGEHLS. Residues 238–258 traverse the membrane as a helical segment; sequence WLGIFWMTGGIYASAMAWSII. Residues 259–277 are Extracellular-facing; sequence PHYGWGFSMGTNYHFHSWR. A helical transmembrane segment spans residues 278-298; the sequence is VFVIVCALPATVSMVALKFMP. Over 299–390 the chain is Cytoplasmic; the sequence is ESPRFLLEMG…CVMGPYRMNT (92 aa). Residues 391–411 traverse the membrane as a helical segment; that stretch reads LILAVVWFTMALSYYGLTVWF. Topologically, residues 412–535 are extracellular; sequence PDMIRYFQDE…CHMDFEEDND (124 aa). At Tyr423 the chain carries Phosphotyrosine. Residues Asn441, Asn491, and Asn516 are each glycosylated (N-linked (GlcNAc...) asparagine). A helical transmembrane segment spans residues 536 to 556; the sequence is FLIYLVSFLGSLSVLPGNIIS. Topologically, residues 557–565 are cytoplasmic; it reads ALLMDRIGR. The chain crosses the membrane as a helical span at residues 566 to 586; sequence LKMIGGSMLISAVCCFFLFFG. Over 587 to 592 the chain is Extracellular; the sequence is NSESAM. A helical membrane pass occupies residues 593 to 613; that stretch reads IGWQCLFCGTSIAAWNALDVI. At 614–626 the chain is on the cytoplasmic side; sequence TVELYPTNQRATA. The helical transmembrane segment at 627–649 threads the bilayer; the sequence is FGILNGLCKFGAILGNTIFASFV. The Extracellular portion of the chain corresponds to 650-653; sequence GITK. Residues 654 to 672 traverse the membrane as a helical segment; sequence VVPILLAAASLVGGGLIAL. Topologically, residues 673 to 683 are cytoplasmic; it reads RLPETREQVLM.

Belongs to the major facilitator superfamily. In terms of assembly, interacts with SYT1 in a calcium-independent manner. Forms a complex with SYT1, syntaxin-1 and SNAP25. As to quaternary structure, (Microbial infection) Interacts with C.botulinum neurotoxin type A (BoNT/A, botA). (Microbial infection) Interacts with C.botulinum neurotoxin type D (BoNT/D, botD). No evidence for its interaction with BoNT/D has also been published. N-glycosylated. In terms of processing, the N-terminal cytoplasmic domain is phosphorylated by CK1. Expressed in ribbon synapses of the retina (at protein level). Expressed in diaphragm motor nerve terminals (at protein level). Expressed in hippocampus neurons (at protein level).

The protein localises to the cytoplasmic vesicle. Its subcellular location is the secretory vesicle. The protein resides in the synaptic vesicle membrane. It is found in the acrosome. In terms of biological role, probably plays a role in the control of regulated secretion in neural and endocrine cells. (Microbial infection) Receptor for C.botulinum neurotoxin type A (BoNT/A, botA); the toxin probably binds via extracellular loop 4. Functionally, (Microbial infection) Possible receptor for C.botulinum neurotoxin type D (BoNT/D, botD). Not a receptor for C.botulinum neurotoxin type D (BoNT/D, botD). Its function is as follows. (Microbial infection) Receptor for C.botulinum neurotoxin type E (BoNT/E); the toxin probably binds via extracellular loop 4. It probably requires glycosylation of Asn-516. This chain is Synaptic vesicle glycoprotein 2B (Sv2b), found in Mus musculus (Mouse).